The following is a 217-amino-acid chain: N-(5'-phosphoribosyl)anthranilate isomerase (217 aa).

It belongs to the TrpF family.

It carries out the reaction N-(5-phospho-beta-D-ribosyl)anthranilate = 1-(2-carboxyphenylamino)-1-deoxy-D-ribulose 5-phosphate. It participates in amino-acid biosynthesis; L-tryptophan biosynthesis; L-tryptophan from chorismate: step 3/5. The protein is N-(5'-phosphoribosyl)anthranilate isomerase of Chlorobium luteolum (strain DSM 273 / BCRC 81028 / 2530) (Pelodictyon luteolum).